A 69-amino-acid chain; its full sequence is Cytochrome c oxidase subunit 8A, mitochondrial (69 aa).

A mitochondrion-targeting transit peptide spans 1-25; it reads MSVLTPLLLRGLTGPARRLPVPRAQ. Positions 2-19 match the SIFI-degron motif; it reads SVLTPLLLRGLTGPARRL. At 26–36 the chain is on the mitochondrial matrix side; that stretch reads IHSKPPREQLG. The chain crosses the membrane as a helical span at residues 37–60; sequence TMDIAIGLTSCFLCFLLPSGWVLS. Residues 61 to 69 are Mitochondrial intermembrane-facing; the sequence is HMENYKKRE.

It belongs to the cytochrome c oxidase VIII family. Component of the cytochrome c oxidase (complex IV, CIV), a multisubunit enzyme composed of 14 subunits. The complex is composed of a catalytic core of 3 subunits MT-CO1, MT-CO2 and MT-CO3, encoded in the mitochondrial DNA, and 11 supernumerary subunits COX4I1 (or COX4I2), COX5A, COX5B, COX6A2 (or COX6A1), COX6B1 (or COX6B2), COX6C, COX7A1 (or COX7A2), COX7B, COX7C, COX8B and NDUFA4, which are encoded in the nuclear genome. The complex exists as a monomer or a dimer and forms supercomplexes (SCs) in the inner mitochondrial membrane with NADH-ubiquinone oxidoreductase (complex I, CI) and ubiquinol-cytochrome c oxidoreductase (cytochrome b-c1 complex, complex III, CIII), resulting in different assemblies (supercomplex SCI(1)III(2)IV(1) and megacomplex MCI(2)III(2)IV(2)). In response to mitochondrial stress, the precursor protein is ubiquitinated by the SIFI complex in the cytoplasm before mitochondrial import, leading to its degradation. Within the SIFI complex, UBR4 initiates ubiquitin chain that are further elongated or branched by KCMF1.

It localises to the mitochondrion inner membrane. The protein operates within energy metabolism; oxidative phosphorylation. Component of the cytochrome c oxidase, the last enzyme in the mitochondrial electron transport chain which drives oxidative phosphorylation. The respiratory chain contains 3 multisubunit complexes succinate dehydrogenase (complex II, CII), ubiquinol-cytochrome c oxidoreductase (cytochrome b-c1 complex, complex III, CIII) and cytochrome c oxidase (complex IV, CIV), that cooperate to transfer electrons derived from NADH and succinate to molecular oxygen, creating an electrochemical gradient over the inner membrane that drives transmembrane transport and the ATP synthase. Cytochrome c oxidase is the component of the respiratory chain that catalyzes the reduction of oxygen to water. Electrons originating from reduced cytochrome c in the intermembrane space (IMS) are transferred via the dinuclear copper A center (CU(A)) of subunit 2 and heme A of subunit 1 to the active site in subunit 1, a binuclear center (BNC) formed by heme A3 and copper B (CU(B)). The BNC reduces molecular oxygen to 2 water molecules using 4 electrons from cytochrome c in the IMS and 4 protons from the mitochondrial matrix. This Bos taurus (Bovine) protein is Cytochrome c oxidase subunit 8A, mitochondrial (COX8A).